A 477-amino-acid chain; its full sequence is Histidine--tRNA ligase (477 aa).

Belongs to the class-II aminoacyl-tRNA synthetase family. As to quaternary structure, homodimer.

The protein resides in the cytoplasm. The enzyme catalyses tRNA(His) + L-histidine + ATP = L-histidyl-tRNA(His) + AMP + diphosphate + H(+). In Xanthomonas campestris pv. campestris (strain ATCC 33913 / DSM 3586 / NCPPB 528 / LMG 568 / P 25), this protein is Histidine--tRNA ligase (hisS).